We begin with the raw amino-acid sequence, 352 residues long: Rhodopsin (352 aa).

Topologically, residues 1–36 (MNGTEGPFFYIPMVNTTGIVRSPYEYPQYYLVNPAA) are extracellular. Residues N2 and N15 are each glycosylated (N-linked (GlcNAc...) asparagine). A helical transmembrane segment spans residues 37–61 (YAALGAYMFFLILTGFPINFLTLYV). Over 62–73 (TLEHKKLRTALN) the chain is Cytoplasmic. A helical transmembrane segment spans residues 74 to 96 (LILLNLAVADLFMVFGGFTTTMY). Topologically, residues 97 to 110 (TSMHGYFVLGRLGC) are extracellular. Residues C110 and C187 are joined by a disulfide bond. A helical transmembrane segment spans residues 111–133 (NVEGFFATLGGEIALWSLVVLAV). Positions 134–136 (ERW) match the 'Ionic lock' involved in activated form stabilization motif. Topologically, residues 134–152 (ERWVVVCKPISNFRFTENH) are cytoplasmic. The helical transmembrane segment at 153 to 173 (AIMGVAFSWIMAATCAVPPLV) threads the bilayer. The Extracellular portion of the chain corresponds to 174-202 (GWSRYIPEGMQCSCGVDYYTRAEGFNNES). Residues 203-224 (FVIYMFIVHFLAPLIVIFFCYG) form a helical membrane-spanning segment. Residues 225–252 (RLLCAVKEAAAAQQESETTQRAEREVTR) are Cytoplasmic-facing. The chain crosses the membrane as a helical span at residues 253-274 (MVIIMVIGFLTSWLPYASVAWY). At 275–286 (IFTHQGTEFGPL) the chain is on the extracellular side. The helical transmembrane segment at 287–308 (FMTIPAFFAKSSALYNPMIYIC) threads the bilayer. K296 carries the N6-(retinylidene)lysine modification. The Cytoplasmic segment spans residues 309–352 (MNKQFRHCMITTLCCGKNPFEEEEGASTTKTEASSVSSSSVSPA). Residues C322 and C323 are each lipidated (S-palmitoyl cysteine). A disordered region spans residues 331–352 (EEGASTTKTEASSVSSSSVSPA). Residues 342 to 352 (SSVSSSSVSPA) show a composition bias toward low complexity.

This sequence belongs to the G-protein coupled receptor 1 family. Opsin subfamily. Post-translationally, phosphorylated on some or all of the serine and threonine residues present in the C-terminal region. Contains one covalently linked retinal chromophore.

The protein localises to the membrane. Its subcellular location is the cell projection. The protein resides in the cilium. It is found in the photoreceptor outer segment. Photoreceptor required for image-forming vision at low light intensity. While most salt water fish species use retinal as chromophore, most freshwater fish use 3-dehydroretinal, or a mixture of retinal and 3-dehydroretinal. Light-induced isomerization of 11-cis to all-trans retinal triggers a conformational change that activates signaling via G-proteins. Subsequent receptor phosphorylation mediates displacement of the bound G-protein alpha subunit by arrestin and terminates signaling. In Pomatoschistus minutus (Sand goby), this protein is Rhodopsin (rho).